Reading from the N-terminus, the 1181-residue chain is MAAVQVVGSWPSVQPREAPREAIPERGNGFRLLSARLCALRPDDSSSARTEIHLLFDQLISENYSEGSGVAPEDVSALLVQACRLVPLNQNHLVSKVSQLIHHLLNRLQVIVDEQHLDFLLAYTISAIHQCSSWTHREILQALAALVYCNGSKCQKYLPELLGNTGLLMKLSDLAQSDPEVRRAAVHCMANLCLSVPGQPYLEEPYQNVCFQAFLTILQSPKSSDMDDITFCMLLQNALKGIQSLLNGGRMKLTQTDELGALLAVLKKFMFHGLPGLNIEMPTVLYPTPLPQYDGRTPIKPQQSESSASRPTLNKKKKSKVKPKKIQQGEEEEKESSGEIEAAPVTGTGRVNLHEGNTWCPSSLGVQSLPLDGSGAAEKDGVSSSFSSSSWKRVSSSESDFSDAEGGMQSKMRSYQAKVRQGALVCFLSTIKSIEKKVLYGYWSAFIPDTPELGSPQSVSLMTLTLKDPSPKTRACALQVLSAILEGSKQFLSVAEDTSDHRRAFTPFSVMIACSIRELHRCLLLALVAESSSQTVTQIIKCLANLVSNAPYDRLKLSLLTKVWNQIKPYIRHKDVNVRVSSLTLLGAIVSTHAPLPEVQLLLQQPCSSGLGNSNSATPHLSPPDWWKKAPAGPSLEETSVSSPKGSSEPCWLIRLCISIVVLPKEDSCSGSDAGSAAGSTYEPSPMRLEALQVLTLLARGYFSMTQAYLMELGEVICKCMGEADPSIQLHGAKLLEELGTGLIQQYKPDSTAAPDQRAPVFLVVMFWTMMLNGPLPRALQNSEHPTLQASACDALSSILPEAFSNLPNDRQMLCITVLLGLNDSKNRLVKAATSRALGVYVLFPCLRQDVIFVADAANAILMSLEDKSLNVRAKAAWSLGNLTDTLIVNMETPDPSFQEEFSGLLLLKMLRSAIEASKDKDKVKSNAVRALGNLLHFLQPSHIEKPTFAEIIEESIQALISTVLTEAAMKVRWNACYAMGNVFKNPALPLGTAPWTSQAYNALTSVVTSCKNFKVRIRSAAALSVPGKREQYGSVDQYARIWNALVTALQKSEDTIDFLEFKYCVSLRTQICQALIHLLSLASASDLPCMKETLELSGNMVQSYILQFLKSGAEGDDTGAPHSPQERDQMVRMALKHMGSIQAPTGDTARRAIMGFLEEILAVCFDSSGSQGALPGLTNQ.

The HEAT 1 repeat unit spans residues 159-198 (PELLGNTGLLMKLSDLAQSDPEVRRAAVHCMANLCLSVPG). Disordered regions lie at residues 292-347 (QYDG…PVTG) and 371-390 (LDGS…SSSS). The span at 300 to 312 (KPQQSESSASRPT) shows a compositional bias: polar residues. Residues 313-325 (LNKKKKSKVKPKK) are compositionally biased toward basic residues. 2 positions are modified to phosphoserine: Ser336 and Ser337. Phosphoserine occurs at positions 399 and 402. HEAT repeat units follow at residues 452–490 (ELGS…GSKQ), 515–552 (SIRE…NAPY), and 558–595 (SLLT…THAP). Positions 613-646 (NSNSATPHLSPPDWWKKAPAGPSLEETSVSSPKG) are disordered. At Thr618 the chain carries Phosphothreonine. The span at 637–646 (EETSVSSPKG) shows a compositional bias: polar residues. Phosphoserine is present on Ser643.

As to expression, amplified in breast cancer cell lines MCF-7 and BT-474.

Its function is as follows. Amplification-dependent oncogene. In Homo sapiens (Human), this protein is HEAT repeat-containing protein 6 (HEATR6).